The following is a 305-amino-acid chain: Ribosomal RNA small subunit methyltransferase H (305 aa).

S-adenosyl-L-methionine-binding positions include 33-35, aspartate 51, phenylalanine 78, aspartate 96, and glutamine 103; that span reads GGY.

Belongs to the methyltransferase superfamily. RsmH family.

The protein localises to the cytoplasm. It carries out the reaction cytidine(1402) in 16S rRNA + S-adenosyl-L-methionine = N(4)-methylcytidine(1402) in 16S rRNA + S-adenosyl-L-homocysteine + H(+). Specifically methylates the N4 position of cytidine in position 1402 (C1402) of 16S rRNA. This Rickettsia bellii (strain RML369-C) protein is Ribosomal RNA small subunit methyltransferase H.